A 160-amino-acid polypeptide reads, in one-letter code: SsrA-binding protein (160 aa).

Basic and acidic residues predominate over residues 137–153; the sequence is DKRDDIKTREWKQDKAR. Residues 137–160 form a disordered region; the sequence is DKRDDIKTREWKQDKARIMKNANR.

It belongs to the SmpB family.

It localises to the cytoplasm. Functionally, required for rescue of stalled ribosomes mediated by trans-translation. Binds to transfer-messenger RNA (tmRNA), required for stable association of tmRNA with ribosomes. tmRNA and SmpB together mimic tRNA shape, replacing the anticodon stem-loop with SmpB. tmRNA is encoded by the ssrA gene; the 2 termini fold to resemble tRNA(Ala) and it encodes a 'tag peptide', a short internal open reading frame. During trans-translation Ala-aminoacylated tmRNA acts like a tRNA, entering the A-site of stalled ribosomes, displacing the stalled mRNA. The ribosome then switches to translate the ORF on the tmRNA; the nascent peptide is terminated with the 'tag peptide' encoded by the tmRNA and targeted for degradation. The ribosome is freed to recommence translation, which seems to be the essential function of trans-translation. The protein is SsrA-binding protein of Edwardsiella ictaluri (strain 93-146).